The sequence spans 119 residues: Large ribosomal subunit protein bL20 (119 aa).

This sequence belongs to the bacterial ribosomal protein bL20 family.

Binds directly to 23S ribosomal RNA and is necessary for the in vitro assembly process of the 50S ribosomal subunit. It is not involved in the protein synthesizing functions of that subunit. The protein is Large ribosomal subunit protein bL20 of Acinetobacter baumannii (strain SDF).